Here is a 265-residue protein sequence, read N- to C-terminus: MRQLCLSTALLFLLVILVDSTPLNIYHIQDEGLETSHRRGPEKRSVIDVVSGIINGVATGTKIIEKGAGILTGLAEIITKAIKGQVMISRIQFDNHTLEELPTLQLEYSTLSEENNGLKTSHRRGLEKRSVTDVVTSIINGVATGTKIIEKGAGILTGLAEIITKAIKGQVMISGIQFDNHTLEEYQTLKIEYSTLSEENKASKPALCLEPKVTGDCNATMTRYFYNTQTGLCEQFVYTGCEGNGNNFENLEDCMKTCSQEAGSL.

A signal peptide spans 1-20 (MRQLCLSTALLFLLVILVDS). 2 repeat units span residues 32-115 (GLET…SEEN) and 117-200 (GLKT…SEEN). Residues 32–200 (GLETSHRRGP…IEYSTLSEEN (169 aa)) are 2 X 84 AA approximate repeats. N-linked (GlcNAc...) asparagine glycosylation is found at N95, N180, and N218. The region spanning 208–258 (CLEPKVTGDCNATMTRYFYNTQTGLCEQFVYTGCEGNGNNFENLEDCMKTC) is the BPTI/Kunitz inhibitor domain. 3 cysteine pairs are disulfide-bonded: C208–C258, C217–C241, and C233–C254.

In terms of tissue distribution, expressed only in the trophectoderm, which forms the outer epithelial layer of the trophoblast.

It localises to the secreted. In terms of biological role, may play a role in mediating maternal-conceptus interactions in the immediate preimplantation period. Does not seem to have proteinase inhibitory activity. This is Trophoblast Kunitz domain protein 1 (TKDP1) from Ovis aries (Sheep).